We begin with the raw amino-acid sequence, 476 residues long: MGIKFLEFIKPFCAVLPEIQKPERKIQFREKVLWTAITLFIFLVCCQIPLFGIMSSDSADPFYWMRVILASNRGTLMELGIAPIVTSGLIMQLLAGAKIIEVGDTPKDRALFNGAQKLFGMIITIGQAIVYVMTGMYGDPSEMGAGICLLIIIQLFVAGLIVLLLDELLQKGYGLGSGISLFIATNICETIVWKAFGPTTVNTGRGTEFEGAIIALFHLLATRTDKVRALREAFYRQNLPNLMNLIATVFVFAVVIYFQGFRVDLPIKSARYRGQYNTYPIKLFYTSNIPIILQSALVSNLYVISQMLSTRFSGNFLVNLLGTWSDATTSGPARAYPVAGLCYYLSPPESFGSVLDDPVHAVIYIVFMLGSCAFFSKTWIEVSGSSAKDVAKQLKEQQMVMRGHRETSMVHELNRYIPTAAAFGGLCIGGLSVMADFLGAIGSGTGILLAVTIIYQYFEIFVKEQSEVGSMGALLF.

At 2–33 (GIKFLEFIKPFCAVLPEIQKPERKIQFREKVL) the chain is on the cytoplasmic side. Residues 34–53 (WTAITLFIFLVCCQIPLFGI) form a helical membrane-spanning segment. Over 54–76 (MSSDSADPFYWMRVILASNRGTL) the chain is Lumenal. The chain crosses the membrane as a helical span at residues 77–96 (MELGIAPIVTSGLIMQLLAG). The Cytoplasmic segment spans residues 97 to 117 (AKIIEVGDTPKDRALFNGAQK). A helical transmembrane segment spans residues 118 to 138 (LFGMIITIGQAIVYVMTGMYG). The Lumenal segment spans residues 139 to 144 (DPSEMG). The chain crosses the membrane as a helical span at residues 145 to 165 (AGICLLIIIQLFVAGLIVLLL). Topologically, residues 166–172 (DELLQKG) are cytoplasmic. A helical membrane pass occupies residues 173–193 (YGLGSGISLFIATNICETIVW). Over 194–240 (KAFGPTTVNTGRGTEFEGAIIALFHLLATRTDKVRALREAFYRQNLP) the chain is Lumenal. A helical membrane pass occupies residues 241-261 (NLMNLIATVFVFAVVIYFQGF). Topologically, residues 262-288 (RVDLPIKSARYRGQYNTYPIKLFYTSN) are cytoplasmic. The helical transmembrane segment at 289-309 (IPIILQSALVSNLYVISQMLS) threads the bilayer. The Lumenal portion of the chain corresponds to 310–354 (TRFSGNFLVNLLGTWSDATTSGPARAYPVAGLCYYLSPPESFGSV). The chain crosses the membrane as a helical span at residues 355-375 (LDDPVHAVIYIVFMLGSCAFF). Over 376–420 (SKTWIEVSGSSAKDVAKQLKEQQMVMRGHRETSMVHELNRYIPTA) the chain is Cytoplasmic. Residues 421–441 (AAFGGLCIGGLSVMADFLGAI) form a helical membrane-spanning segment. At 442–445 (GSGT) the chain is on the lumenal side. Residues 446–462 (GILLAVTIIYQYFEIFV) traverse the membrane as a helical segment. Residues 463–476 (KEQSEVGSMGALLF) lie on the Cytoplasmic side of the membrane.

It belongs to the SecY/SEC61-alpha family. In terms of assembly, the SEC61 channel-forming translocon complex consists of channel-forming core components SEC61A1, SEC61B and SEC61G and different auxiliary components such as SEC62 and SEC63. The SEC61 channel associates with the multi-pass translocon (MPT) complex.

The protein localises to the endoplasmic reticulum membrane. Component of SEC61 channel-forming translocon complex that mediates transport of signal peptide-containing precursor polypeptides across the endoplasmic reticulum (ER). Forms a ribosome receptor and a gated pore in the ER membrane, both functions required for cotranslational translocation of nascent polypeptides. May cooperate with auxiliary protein SEC62, SEC63 and HSPA5/BiP to enable post-translational transport of small presecretory proteins. The SEC61 channel is also involved in ER membrane insertion of transmembrane proteins: it mediates membrane insertion of the first few transmembrane segments of proteins, while insertion of subsequent transmembrane regions of multi-pass membrane proteins is mediated by the multi-pass translocon (MPT) complex. This is Protein transport protein Sec61 subunit alpha (sec61a) from Bovichtus variegatus (Thornfish).